The following is a 291-amino-acid chain: ATP synthase gamma chain 2 (291 aa).

A disordered region spans residues 187–208 (LLPHPDKDESQDSKPNDATSRW). The span at 190-201 (HPDKDESQDSKP) shows a compositional bias: basic and acidic residues.

It belongs to the ATPase gamma chain family. F-type ATPases have 2 components, CF(1) - the catalytic core - and CF(0) - the membrane proton channel. CF(1) has five subunits: alpha(3), beta(3), gamma(1), delta(1), epsilon(1). CF(0) has three main subunits: a, b and c.

It localises to the cell inner membrane. In terms of biological role, produces ATP from ADP in the presence of a proton gradient across the membrane. The gamma chain is believed to be important in regulating ATPase activity and the flow of protons through the CF(0) complex. The protein is ATP synthase gamma chain 2 of Photobacterium profundum (strain SS9).